The primary structure comprises 94 residues: DNA-directed RNA polymerase subunit omega (94 aa).

It belongs to the RNA polymerase subunit omega family. In terms of assembly, the RNAP catalytic core consists of 2 alpha, 1 beta, 1 beta' and 1 omega subunit. When a sigma factor is associated with the core the holoenzyme is formed, which can initiate transcription.

The enzyme catalyses RNA(n) + a ribonucleoside 5'-triphosphate = RNA(n+1) + diphosphate. Its function is as follows. Promotes RNA polymerase assembly. Latches the N- and C-terminal regions of the beta' subunit thereby facilitating its interaction with the beta and alpha subunits. The chain is DNA-directed RNA polymerase subunit omega from Bifidobacterium longum subsp. infantis (strain ATCC 15697 / DSM 20088 / JCM 1222 / NCTC 11817 / S12).